The following is a 492-amino-acid chain: Malonyl-CoA decarboxylase, mitochondrial (492 aa).

Residues 1–28 (MRGLGPGLRARRLLPLRSPPRPPGPRGR) are disordered. A mitochondrion-targeting transit peptide spans 1-38 (MRGLGPGLRARRLLPLRSPPRPPGPRGRRLCGGLAASA). Residues 39-189 (MDELLRRAVP…VLKSMLSEWF (151 aa)) are alpha-helical domain. Residue lysine 58 is modified to N6-acetyllysine. At lysine 167 the chain carries N6-acetyllysine; alternate. N6-succinyllysine; alternate is present on lysine 167. A catalytic domain region spans residues 190–492 (SSGFLNLERV…VAQFQNNSKL (303 aa)). At lysine 210 the chain carries N6-acetyllysine. An N6-succinyllysine modification is found at lysine 221. 298 to 304 (QGVELGT) serves as a coordination point for malonyl-CoA. An N6-acetyllysine modification is found at lysine 316. Serine 328 lines the malonyl-CoA pocket. The active-site Proton acceptor is the serine 328. The residue at position 385 (lysine 385) is an N6-acetyllysine; alternate. Lysine 385 is subject to N6-succinyllysine; alternate. Lysine 388 is modified (N6-acetyllysine). Histidine 422 provides a ligand contact to malonyl-CoA. Catalysis depends on histidine 422, which acts as the Proton donor. An N6-acetyllysine mark is found at lysine 441 and lysine 471. Residues 490-492 (SKL) carry the Microbody targeting signal motif.

Homotetramer. Dimer of dimers. The two subunits within a dimer display conformational differences suggesting that at any given moment, only one of the two subunits is competent for malonyl-CoA binding and catalytic activity. Under oxidizing conditions, can form disulfide-linked homotetramers (in vitro). Associates with the peroxisomal targeting signal receptor PEX5. Interchain disulfide bonds may form in peroxisomes (Potential). Interchain disulfide bonds are not expected to form in the reducing environment of the cytoplasm and mitochondria. In terms of processing, acetylation at Lys-471 activates malonyl-CoA decarboxylase activity. Deacetylation at Lys-471 by SIRT4 represses activity, leading to promote lipogenesis.

It is found in the cytoplasm. It localises to the mitochondrion matrix. The protein localises to the peroxisome. Its subcellular location is the peroxisome matrix. It carries out the reaction malonyl-CoA + H(+) = acetyl-CoA + CO2. The protein operates within metabolic intermediate biosynthesis; acetyl-CoA biosynthesis; acetyl-CoA from malonyl-CoA: step 1/1. With respect to regulation, malonyl-CoA decarboxylase activity does not require any cofactors or divalent metal ions. In terms of biological role, catalyzes the conversion of malonyl-CoA to acetyl-CoA. In the fatty acid biosynthesis MCD selectively removes malonyl-CoA and thus assures that methyl-malonyl-CoA is the only chain elongating substrate for fatty acid synthase and that fatty acids with multiple methyl side chains are produced. In peroxisomes it may be involved in degrading intraperoxisomal malonyl-CoA, which is generated by the peroxisomal beta-oxidation of odd chain-length dicarboxylic fatty acids. Plays a role in the metabolic balance between glucose and lipid oxidation in muscle independent of alterations in insulin signaling. Plays a role in controlling the extent of ischemic injury by promoting glucose oxidation. The polypeptide is Malonyl-CoA decarboxylase, mitochondrial (Mus musculus (Mouse)).